The chain runs to 853 residues: DNA mismatch repair protein MutS (853 aa).

G614 to S621 lines the ATP pocket.

Belongs to the DNA mismatch repair MutS family.

In terms of biological role, this protein is involved in the repair of mismatches in DNA. It is possible that it carries out the mismatch recognition step. This protein has a weak ATPase activity. In Escherichia coli (strain SMS-3-5 / SECEC), this protein is DNA mismatch repair protein MutS.